Consider the following 675-residue polypeptide: Polyamine deacetylase HDAC10 (675 aa).

Substrate is bound at residue aspartate 22. Residues 23–26 carry the Substrate specificity motif; the sequence is PACE. Aspartate 94 contacts substrate. Catalysis depends on histidine 137, which acts as the Proton donor/acceptor. Residues aspartate 174, histidine 176, and aspartate 267 each coordinate Zn(2+). Tyrosine 307 provides a ligand contact to substrate. A disordered region spans residues 362–399; sequence LAQSETNPKRPRLDATNGGPKESSEPASESNPKKTAQD.

It belongs to the histone deacetylase family. HD type 2 subfamily.

It is found in the cytoplasm. The protein resides in the nucleus. The enzyme catalyses N(8)-acetylspermidine + H2O = spermidine + acetate. It carries out the reaction N-acetylputrescine + H2O = putrescine + acetate. The catalysed reaction is N-acetylcadaverine + H2O = cadaverine + acetate. Its function is as follows. Polyamine deacetylase (PDAC), which acts preferentially on N(8)-acetylspermidine, and also on acetylcadaverine and acetylputrescine. Exhibits attenuated catalytic activity toward N(1),N(8)-diacetylspermidine and very low activity, if any, toward N(1)-acetylspermidine. Has a very weak lysine deacetylase, if any. This is Polyamine deacetylase HDAC10 (hdac10) from Danio rerio (Zebrafish).